The sequence spans 78 residues: Chondrosarcoma-associated gene 1 protein (78 aa).

The first 19 residues, 1 to 19 (MSATTACWPAFTVLGEARG), serve as a signal peptide directing secretion. The segment at 35–78 (KMSRKPRASSPFSNNHPSTPKRFPRQPRREKGPVKEVPGTKGSP) is disordered.

Expressed in chondrosarcoma, melanoma, cartilage and testis, but not in other normal tissues.

The protein localises to the cytoplasm. Its subcellular location is the cytoskeleton. It localises to the microtubule organizing center. It is found in the centrosome. The protein resides in the spindle pole. In terms of biological role, may play an important role in maintaining centrosome integrity during mitosis. This chain is Chondrosarcoma-associated gene 1 protein, found in Homo sapiens (Human).